The following is a 236-amino-acid chain: MKDFLPAFWAVIPAAGIGARMAADRPKQYLSLGGLTILEHSLLCFLDHPRLKGLVISLAVDDPYWAALPCAHDTRIQRVDGGSERSGSVLNALLHLHAQGASDNDWVLVHDAARPNLARSDLDNLLGELADDPVGGLLAVPARDTLKRADSSGRVLETVDRSLVWQAFTPQMFRLGALHRALADSLVSNVSITDEASAIEWAGQSPRLIEGRSDNIKVTRPEDLEWLRQRRSEFGR.

It belongs to the IspD/TarI cytidylyltransferase family. IspD subfamily.

It catalyses the reaction 2-C-methyl-D-erythritol 4-phosphate + CTP + H(+) = 4-CDP-2-C-methyl-D-erythritol + diphosphate. Its pathway is isoprenoid biosynthesis; isopentenyl diphosphate biosynthesis via DXP pathway; isopentenyl diphosphate from 1-deoxy-D-xylulose 5-phosphate: step 2/6. In terms of biological role, catalyzes the formation of 4-diphosphocytidyl-2-C-methyl-D-erythritol from CTP and 2-C-methyl-D-erythritol 4-phosphate (MEP). This Pseudomonas syringae pv. syringae (strain B728a) protein is 2-C-methyl-D-erythritol 4-phosphate cytidylyltransferase.